Here is a 182-residue protein sequence, read N- to C-terminus: Keratin, ultra high-sulfur matrix protein (182 aa).

The protein belongs to the KRTAP type 5 family. Cuticle layers of differentiating wool follicles.

Its function is as follows. The keratin products of mammalian epidermal derivatives such as wool and hair consist of microfibrils embedded in a rigid matrix of other proteins. The matrix proteins include the high-sulfur and high-tyrosine keratins, having molecular weights of 6-20 kDa, whereas the microfibrils contain the larger, low-sulfur keratins (40-56 kDa). The protein is Keratin, ultra high-sulfur matrix protein of Ovis aries (Sheep).